Consider the following 44-residue polypeptide: Protein PsbN (44 aa).

Residues 7 to 29 traverse the membrane as a helical segment; it reads VATVFVSCLVLSITGYSLYIGFG.

This sequence belongs to the PsbN family.

The protein localises to the plastid. It is found in the chloroplast thylakoid membrane. Its function is as follows. May play a role in photosystem I and II biogenesis. The protein is Protein PsbN of Nephroselmis olivacea (Green alga).